A 383-amino-acid polypeptide reads, in one-letter code: Succinyl-diaminopimelate desuccinylase (383 aa).

Histidine 74 contributes to the Zn(2+) binding site. Aspartate 76 is an active-site residue. Aspartate 107 contributes to the Zn(2+) binding site. Glutamate 141 serves as the catalytic Proton acceptor. Zn(2+) is bound by residues glutamate 142, glutamate 170, and histidine 356.

The protein belongs to the peptidase M20A family. DapE subfamily. Homodimer. Zn(2+) is required as a cofactor. Co(2+) serves as cofactor.

It catalyses the reaction N-succinyl-(2S,6S)-2,6-diaminopimelate + H2O = (2S,6S)-2,6-diaminopimelate + succinate. It functions in the pathway amino-acid biosynthesis; L-lysine biosynthesis via DAP pathway; LL-2,6-diaminopimelate from (S)-tetrahydrodipicolinate (succinylase route): step 3/3. Its function is as follows. Catalyzes the hydrolysis of N-succinyl-L,L-diaminopimelic acid (SDAP), forming succinate and LL-2,6-diaminopimelate (DAP), an intermediate involved in the bacterial biosynthesis of lysine and meso-diaminopimelic acid, an essential component of bacterial cell walls. The sequence is that of Succinyl-diaminopimelate desuccinylase from Polynucleobacter necessarius subsp. necessarius (strain STIR1).